A 280-amino-acid polypeptide reads, in one-letter code: Large ribosomal subunit protein uL2 (280 aa).

3 disordered regions span residues 1–20 (MAIR…SVSM), 29–58 (PEKS…GGGH), and 225–280 (VMNP…NKKR). Basic residues predominate over residues 45-58 (SHGHITTRHRGGGH). Residues 253–269 (KEGRTRRPKRYSDDMIV) show a composition bias toward basic and acidic residues. Basic residues predominate over residues 270–280 (RRRRANKNKKR).

It belongs to the universal ribosomal protein uL2 family. As to quaternary structure, part of the 50S ribosomal subunit. Forms a bridge to the 30S subunit in the 70S ribosome.

In terms of biological role, one of the primary rRNA binding proteins. Required for association of the 30S and 50S subunits to form the 70S ribosome, for tRNA binding and peptide bond formation. It has been suggested to have peptidyltransferase activity; this is somewhat controversial. Makes several contacts with the 16S rRNA in the 70S ribosome. The protein is Large ribosomal subunit protein uL2 of Corynebacterium efficiens (strain DSM 44549 / YS-314 / AJ 12310 / JCM 11189 / NBRC 100395).